The primary structure comprises 444 residues: Trigger factor (444 aa).

A PPIase FKBP-type domain is found at 161–246 (GDRVVIDFKG…VQKVEGQKLP (86 aa)).

The protein belongs to the FKBP-type PPIase family. Tig subfamily.

Its subcellular location is the cytoplasm. The enzyme catalyses [protein]-peptidylproline (omega=180) = [protein]-peptidylproline (omega=0). Involved in protein export. Acts as a chaperone by maintaining the newly synthesized protein in an open conformation. Functions as a peptidyl-prolyl cis-trans isomerase. This is Trigger factor from Saccharophagus degradans (strain 2-40 / ATCC 43961 / DSM 17024).